Reading from the N-terminus, the 138-residue chain is Augmin complex subunit msd1 (138 aa).

Component of the augmin complex composed of dgt2, dgt3, dgt4, dgt5, dgt6, msd1, msd5 and wac. The complex interacts directly or indirectly with microtubules and is required for centrosome-independent generation of spindle microtubules.

The protein localises to the cytoplasm. It is found in the cytoskeleton. The protein resides in the spindle. Its function is as follows. As part of the augmin complex, plays a role in centrosome-independent generation of spindle microtubules. The complex is required for mitotic spindle assembly through its involvement in localizing gamma-tubulin to spindle microtubules. msd1 is required for microtubule nucleation from within the mitotic spindle and for localization of Grip71 to centrosomes and mitotic spindle. The sequence is that of Augmin complex subunit msd1 from Drosophila melanogaster (Fruit fly).